The primary structure comprises 339 residues: Protein-glutamate methylesterase/protein-glutamine glutaminase (339 aa).

The 118-residue stretch at 2-119 (RIGVVNDMPM…EGNASSQSAR (118 aa)) folds into the Response regulatory domain. Position 53 is a 4-aspartylphosphate (Asp-53). The CheB-type methylesterase domain maps to 149-338 (PTPRRLIAIG…SRIIEACERS (190 aa)). Residues Ser-160, His-187, and Asp-280 contribute to the active site.

It belongs to the CheB family. Post-translationally, phosphorylated by CheA. Phosphorylation of the N-terminal regulatory domain activates the methylesterase activity.

The protein localises to the cytoplasm. The enzyme catalyses [protein]-L-glutamate 5-O-methyl ester + H2O = L-glutamyl-[protein] + methanol + H(+). It carries out the reaction L-glutaminyl-[protein] + H2O = L-glutamyl-[protein] + NH4(+). Functionally, involved in chemotaxis. Part of a chemotaxis signal transduction system that modulates chemotaxis in response to various stimuli. Catalyzes the demethylation of specific methylglutamate residues introduced into the chemoreceptors (methyl-accepting chemotaxis proteins or MCP) by CheR. Also mediates the irreversible deamidation of specific glutamine residues to glutamic acid. This chain is Protein-glutamate methylesterase/protein-glutamine glutaminase, found in Mesorhizobium japonicum (strain LMG 29417 / CECT 9101 / MAFF 303099) (Mesorhizobium loti (strain MAFF 303099)).